A 365-amino-acid chain; its full sequence is Mitogen-activated protein kinase HOG1A (365 aa).

The Protein kinase domain maps to 24 to 303 (YTDLQPVGMG…AADALAHPYL (280 aa)). ATP-binding positions include 30-38 (VGMGAFGLL) and K53. D145 functions as the Proton acceptor in the catalytic mechanism. T175 carries the post-translational modification Phosphothreonine. The TXY signature appears at 175 to 177 (TGY). The residue at position 177 (Y177) is a Phosphotyrosine.

It belongs to the protein kinase superfamily. Ser/Thr protein kinase family. MAP kinase subfamily. HOG1 sub-subfamily. Requires Mg(2+) as cofactor. Post-translationally, phosphorylated. Dually phosphorylated on Thr-175 and Tyr-177, which activates the enzyme. Rapidly dephosphorylated upon either hypo- or hyperosmotic shock.

It is found in the cytoplasm. It localises to the nucleus. The catalysed reaction is L-seryl-[protein] + ATP = O-phospho-L-seryl-[protein] + ADP + H(+). It catalyses the reaction L-threonyl-[protein] + ATP = O-phospho-L-threonyl-[protein] + ADP + H(+). Its activity is regulated as follows. Activated by tyrosine and threonine phosphorylation. Functionally, proline-directed serine/threonine-protein kinase involved in a signal transduction pathway that is activated by changes in the osmolarity of the extracellular environment. Controls osmotic regulation of transcription of target genes. The sequence is that of Mitogen-activated protein kinase HOG1A (HOG1A) from Wallemia ichthyophaga (strain EXF-994 / CBS 113033).